Here is a 241-residue protein sequence, read N- to C-terminus: Eukaryotic translation initiation factor 6 (241 aa).

This sequence belongs to the eIF-6 family. As to quaternary structure, monomer. Associates with the 60S ribosomal subunit.

It is found in the cytoplasm. The protein resides in the nucleus. Its subcellular location is the nucleolus. Its function is as follows. Binds to the 60S ribosomal subunit and prevents its association with the 40S ribosomal subunit to form the 80S initiation complex in the cytoplasm. Is also involved in ribosome biogenesis. Associates with pre-60S subunits in the nucleus and is involved in its nuclear export. The sequence is that of Eukaryotic translation initiation factor 6 from Encephalitozoon cuniculi (strain GB-M1) (Microsporidian parasite).